The primary structure comprises 79 residues: Spidroin-1 (79 aa).

The protein belongs to the silk fibroin family. In terms of assembly, major subunit, with spidroin 2, of the dragline silk.

It localises to the secreted. It is found in the extracellular space. Functionally, spiders' major ampullate silk possesses unique characteristics of strength and elasticity. Fibroin consists of pseudocrystalline regions of antiparallel beta-sheet interspersed with elastic amorphous segments. The chain is Spidroin-1 from Araneus bicentenarius (Giant lichen orbweaver).